The chain runs to 576 residues: Arginine--tRNA ligase (576 aa).

The 'HIGH' region motif lies at 122 to 132 (PNVAKEMHVGH).

The protein belongs to the class-I aminoacyl-tRNA synthetase family. In terms of assembly, monomer.

Its subcellular location is the cytoplasm. The catalysed reaction is tRNA(Arg) + L-arginine + ATP = L-arginyl-tRNA(Arg) + AMP + diphosphate. The protein is Arginine--tRNA ligase of Thermobifida fusca (strain YX).